A 198-amino-acid polypeptide reads, in one-letter code: Glycerol-3-phosphate acyltransferase 2 (198 aa).

Transmembrane regions (helical) follow at residues 4–24, 71–91, 113–133, and 147–167; these read TYLL…LVVG, LPII…AVLG, LLCY…SLLF, and VVAV…AMCL.

This sequence belongs to the PlsY family. In terms of assembly, probably interacts with PlsX.

It localises to the cell membrane. The catalysed reaction is an acyl phosphate + sn-glycerol 3-phosphate = a 1-acyl-sn-glycero-3-phosphate + phosphate. It participates in lipid metabolism; phospholipid metabolism. Its function is as follows. Catalyzes the transfer of an acyl group from acyl-phosphate (acyl-PO(4)) to glycerol-3-phosphate (G3P) to form lysophosphatidic acid (LPA). This enzyme utilizes acyl-phosphate as fatty acyl donor, but not acyl-CoA or acyl-ACP. This Bacillus cereus (strain ATCC 10987 / NRS 248) protein is Glycerol-3-phosphate acyltransferase 2.